A 357-amino-acid chain; its full sequence is Eukaryotic translation initiation factor 3 subunit F (357 aa).

Residues 1–82 (MATPAVPVSA…PAPALPGPAL (82 aa)) form a disordered region. A2 bears the N-acetylalanine mark. A compositionally biased stretch (pro residues) spans 9–36 (SAPPATPTPVPAAAPASVPAPTPAPAAA). Positions 37-74 (PVPAAAPASSSDPAAAAAATAAPGQTPASAQAPAQTPA) are enriched in low complexity. S46 is subject to Phosphoserine; by CDK11; in vitro. The MPN domain maps to 92 to 222 (VRLHPVILAS…IKAYVSTLMG (131 aa)). K238 carries the post-translational modification N6-acetyllysine. S258 bears the Phosphoserine mark.

It belongs to the eIF-3 subunit F family. Component of the eukaryotic translation initiation factor 3 (eIF-3) complex, which is composed of 13 subunits: EIF3A, EIF3B, EIF3C, EIF3D, EIF3E, EIF3F, EIF3G, EIF3H, EIF3I, EIF3J, EIF3K, EIF3L and EIF3M. The eIF-3 complex appears to include 3 stable modules: module A is composed of EIF3A, EIF3B, EIF3G and EIF3I; module B is composed of EIF3F, EIF3H, and EIF3M; and module C is composed of EIF3C, EIF3D, EIF3E, EIF3K and EIF3L. EIF3C of module C binds EIF3B of module A and EIF3H of module B, thereby linking the three modules. EIF3J is a labile subunit that binds to the eIF-3 complex via EIF3B. The eIF-3 complex interacts with RPS6KB1 under conditions of nutrient depletion. Mitogenic stimulation leads to binding and activation of a complex composed of MTOR and RPTOR, leading to phosphorylation and release of RPS6KB1 and binding of EIF4B to eIF-3. Interacts with RNF139; the interaction leads to protein translation inhibitions in a ubiquitination-dependent manner. Interacts with DTX1, the interaction is required for deubiquitinating activity towards NOTCH1. Post-translationally, phosphorylation is enhanced upon serum stimulation. Phosphorylated during apoptosis by caspase-processed CDK11.

The protein resides in the cytoplasm. It carries out the reaction Thiol-dependent hydrolysis of ester, thioester, amide, peptide and isopeptide bonds formed by the C-terminal Gly of ubiquitin (a 76-residue protein attached to proteins as an intracellular targeting signal).. In terms of biological role, component of the eukaryotic translation initiation factor 3 (eIF-3) complex, which is required for several steps in the initiation of protein synthesis. The eIF-3 complex associates with the 40S ribosome and facilitates the recruitment of eIF-1, eIF-1A, eIF-2:GTP:methionyl-tRNAi and eIF-5 to form the 43S pre-initiation complex (43S PIC). The eIF-3 complex stimulates mRNA recruitment to the 43S PIC and scanning of the mRNA for AUG recognition. The eIF-3 complex is also required for disassembly and recycling of post-termination ribosomal complexes and subsequently prevents premature joining of the 40S and 60S ribosomal subunits prior to initiation. The eIF-3 complex specifically targets and initiates translation of a subset of mRNAs involved in cell proliferation, including cell cycling, differentiation and apoptosis, and uses different modes of RNA stem-loop binding to exert either translational activation or repression. Its function is as follows. Deubiquitinates activated NOTCH1, promoting its nuclear import, thereby acting as a positive regulator of Notch signaling. This Homo sapiens (Human) protein is Eukaryotic translation initiation factor 3 subunit F.